Reading from the N-terminus, the 447-residue chain is Divalent metal cation transporter MntH (447 aa).

Transmembrane regions (helical) follow at residues 26 to 48 (AGFW…GYMD), 65 to 85 (TLLS…AMSA), 108 to 128 (GFLL…AEII), 140 to 160 (IPLI…LLLM), 169 to 189 (AIVA…VLLS), 212 to 232 (MLYL…LYLG), 264 to 284 (LFLA…LFYG), 304 to 324 (IVGA…LLAS), 359 to 379 (VLSV…EAKI), 383 to 403 (LTFS…PLVI), and 426 to 446 (TATI…LGLI).

The protein belongs to the NRAMP family.

It localises to the cell membrane. Its function is as follows. H(+)-stimulated, divalent metal cation uptake system. The sequence is that of Divalent metal cation transporter MntH from Pediococcus pentosaceus (strain ATCC 25745 / CCUG 21536 / LMG 10740 / 183-1w).